Reading from the N-terminus, the 434-residue chain is 3-phosphoshikimate 1-carboxyvinyltransferase (434 aa).

Residues lysine 22, serine 23, and arginine 27 each contribute to the 3-phosphoshikimate site. Lysine 22 is a binding site for phosphoenolpyruvate. Positions 93 and 121 each coordinate phosphoenolpyruvate. 3-phosphoshikimate is bound by residues serine 168, serine 169, glutamine 170, serine 199, aspartate 320, and lysine 347. Position 170 (glutamine 170) interacts with phosphoenolpyruvate. Residue aspartate 320 is the Proton acceptor of the active site. Arginine 351, arginine 395, and lysine 420 together coordinate phosphoenolpyruvate.

This sequence belongs to the EPSP synthase family. In terms of assembly, monomer.

The protein localises to the cytoplasm. The enzyme catalyses 3-phosphoshikimate + phosphoenolpyruvate = 5-O-(1-carboxyvinyl)-3-phosphoshikimate + phosphate. Its pathway is metabolic intermediate biosynthesis; chorismate biosynthesis; chorismate from D-erythrose 4-phosphate and phosphoenolpyruvate: step 6/7. Catalyzes the transfer of the enolpyruvyl moiety of phosphoenolpyruvate (PEP) to the 5-hydroxyl of shikimate-3-phosphate (S3P) to produce enolpyruvyl shikimate-3-phosphate and inorganic phosphate. This is 3-phosphoshikimate 1-carboxyvinyltransferase from Cupriavidus necator (strain ATCC 17699 / DSM 428 / KCTC 22496 / NCIMB 10442 / H16 / Stanier 337) (Ralstonia eutropha).